We begin with the raw amino-acid sequence, 189 residues long: Signal peptidase complex catalytic subunit sec11 (189 aa).

Residues 1-8 (MQKLSFRQ) are Cytoplasmic-facing. Residues 9-25 (GLAQILNLLLVLSSAYM) traverse the membrane as a helical; Signal-anchor for type II membrane protein segment. The Lumenal portion of the chain corresponds to 26-189 (GYKTLSFVTD…LLTLIQKEEQ (164 aa)). Residues Ser47 and His104 each act as charge relay system in the active site. Asn114 carries an N-linked (GlcNAc...) asparagine glycan. Asp129 acts as the Charge relay system in catalysis. Positions 173 to 184 (IMLGGLGLLTLI) are C-terminal short (CTS) helix.

The protein belongs to the peptidase S26B family. In terms of assembly, component of the signal peptidase complex (SPC) composed of a catalytic subunit sec11 and three accessory subunits spc1, spc2 and spc3. The complex induces a local thinning of the ER membrane which is used to measure the length of the signal peptide (SP) h-region of protein substrates. This ensures the selectivity of the complex towards h-regions shorter than 18-20 amino acids. SPC associates with the translocon complex.

The protein localises to the endoplasmic reticulum membrane. The catalysed reaction is Cleavage of hydrophobic, N-terminal signal or leader sequences from secreted and periplasmic proteins.. Its function is as follows. Catalytic component of the signal peptidase complex (SPC) which catalyzes the cleavage of N-terminal signal sequences from nascent proteins as they are translocated into the lumen of the endoplasmic reticulum. Specifically cleaves N-terminal signal peptides that contain a hydrophobic alpha-helix (h-region) shorter than 18-20 amino acids. This Schizosaccharomyces pombe (strain 972 / ATCC 24843) (Fission yeast) protein is Signal peptidase complex catalytic subunit sec11 (sec11).